The following is a 301-amino-acid chain: Protoheme IX farnesyltransferase (301 aa).

Helical transmembrane passes span 9–29 (VLAYIALTKPRVIELLLVATI), 42–62 (IALILSTLFGGWMGAASANSL), 89–109 (TSHAFVFGMTLGVASFLWLWW), 113–133 (LLAGCLVVLTIAFYVLVYTMV), 142–162 (VVWGGAAGCMPVMVGWSAVTG), 168–188 (PIVLFLVIFFWTPPHTWALAM), 211–231 (VTKQILLYSWAMVITSLTLVP), 232–252 (AAGVVYAAVTLVAGAWFLLMA), and 280–300 (VVFVGLAVDSVLGLQTVGSLL).

The protein belongs to the UbiA prenyltransferase family. Protoheme IX farnesyltransferase subfamily.

It is found in the cell membrane. The catalysed reaction is heme b + (2E,6E)-farnesyl diphosphate + H2O = Fe(II)-heme o + diphosphate. It participates in porphyrin-containing compound metabolism; heme O biosynthesis; heme O from protoheme: step 1/1. Its function is as follows. Converts heme B (protoheme IX) to heme O by substitution of the vinyl group on carbon 2 of heme B porphyrin ring with a hydroxyethyl farnesyl side group. The polypeptide is Protoheme IX farnesyltransferase (Rhodococcus jostii (strain RHA1)).